A 130-amino-acid polypeptide reads, in one-letter code: Small ribosomal subunit protein uS9 (130 aa).

Residues 109-130 are disordered; the sequence is RKKERKKYGQRAARARFQYSKR.

It belongs to the universal ribosomal protein uS9 family.

This Oleidesulfovibrio alaskensis (strain ATCC BAA-1058 / DSM 17464 / G20) (Desulfovibrio alaskensis) protein is Small ribosomal subunit protein uS9.